A 389-amino-acid polypeptide reads, in one-letter code: Succinate--CoA ligase [ADP-forming] subunit beta (389 aa).

The region spanning 9 to 244 (KQLLAEYGIP…KTQEDETEVT (236 aa)) is the ATP-grasp domain. Residues K46, 53–55 (GRG), G102, and E107 each bind ATP. The Mg(2+) site is built by N199 and D213. Substrate is bound by residues N264 and 321–323 (GIV).

The protein belongs to the succinate/malate CoA ligase beta subunit family. Heterotetramer of two alpha and two beta subunits. The cofactor is Mg(2+).

The enzyme catalyses succinate + ATP + CoA = succinyl-CoA + ADP + phosphate. It carries out the reaction GTP + succinate + CoA = succinyl-CoA + GDP + phosphate. Its pathway is carbohydrate metabolism; tricarboxylic acid cycle; succinate from succinyl-CoA (ligase route): step 1/1. Functionally, succinyl-CoA synthetase functions in the citric acid cycle (TCA), coupling the hydrolysis of succinyl-CoA to the synthesis of either ATP or GTP and thus represents the only step of substrate-level phosphorylation in the TCA. The beta subunit provides nucleotide specificity of the enzyme and binds the substrate succinate, while the binding sites for coenzyme A and phosphate are found in the alpha subunit. The protein is Succinate--CoA ligase [ADP-forming] subunit beta of Xanthomonas axonopodis pv. citri (strain 306).